The sequence spans 441 residues: Putative serine/threonine-protein kinase F31E3.2 (441 aa).

The span at 1–16 (MGNVATRKRPGCHHHI) shows a compositional bias: basic residues. A disordered region spans residues 1–41 (MGNVATRKRPGCHHHIGRNEENLDDDEDGPAKKRLRIGEPQ). The Protein kinase domain maps to 126-381 (FVLERQLGRG…FTVLHAHPFF (256 aa)). ATP is bound by residues 132–140 (LGRGSFGVV) and Lys-156. Residue Asp-253 is the Proton acceptor of the active site.

The protein belongs to the protein kinase superfamily. Ser/Thr protein kinase family.

The enzyme catalyses L-seryl-[protein] + ATP = O-phospho-L-seryl-[protein] + ADP + H(+). The catalysed reaction is L-threonyl-[protein] + ATP = O-phospho-L-threonyl-[protein] + ADP + H(+). The chain is Putative serine/threonine-protein kinase F31E3.2 from Caenorhabditis elegans.